We begin with the raw amino-acid sequence, 77 residues long: RNA-binding protein Hfq (77 aa).

Residues 9–68 (DPFLNALRKEHIPVAIYLVNGIKLQGQIESFDQFVILLKNTVSQMVYKHAISTVVPARAI) form the Sm domain.

The protein belongs to the Hfq family. In terms of assembly, homohexamer.

Its function is as follows. RNA chaperone that binds small regulatory RNA (sRNAs) and mRNAs to facilitate mRNA translational regulation in response to envelope stress, environmental stress and changes in metabolite concentrations. Also binds with high specificity to tRNAs. The polypeptide is RNA-binding protein Hfq (Psychromonas ingrahamii (strain DSM 17664 / CCUG 51855 / 37)).